The primary structure comprises 297 residues: Formamidopyrimidine-DNA glycosylase (297 aa).

Catalysis depends on Pro2, which acts as the Schiff-base intermediate with DNA. The active-site Proton donor is the Glu3. Lys58 functions as the Proton donor; for beta-elimination activity in the catalytic mechanism. DNA is bound by residues His106, Arg133, and Arg178. The FPG-type zinc-finger motif lies at 263–297 (FVYDRAGEPCRICGTPIRQILQGQRSTFYCPHCQH). Arg287 (proton donor; for delta-elimination activity) is an active-site residue.

It belongs to the FPG family. Monomer. It depends on Zn(2+) as a cofactor.

It carries out the reaction Hydrolysis of DNA containing ring-opened 7-methylguanine residues, releasing 2,6-diamino-4-hydroxy-5-(N-methyl)formamidopyrimidine.. It catalyses the reaction 2'-deoxyribonucleotide-(2'-deoxyribose 5'-phosphate)-2'-deoxyribonucleotide-DNA = a 3'-end 2'-deoxyribonucleotide-(2,3-dehydro-2,3-deoxyribose 5'-phosphate)-DNA + a 5'-end 5'-phospho-2'-deoxyribonucleoside-DNA + H(+). Functionally, involved in base excision repair of DNA damaged by oxidation or by mutagenic agents. Acts as a DNA glycosylase that recognizes and removes damaged bases. Has a preference for oxidized purines, such as 7,8-dihydro-8-oxoguanine (8-oxoG). Has AP (apurinic/apyrimidinic) lyase activity and introduces nicks in the DNA strand. Cleaves the DNA backbone by beta-delta elimination to generate a single-strand break at the site of the removed base with both 3'- and 5'-phosphates. The protein is Formamidopyrimidine-DNA glycosylase of Cupriavidus metallidurans (strain ATCC 43123 / DSM 2839 / NBRC 102507 / CH34) (Ralstonia metallidurans).